Here is a 208-residue protein sequence, read N- to C-terminus: Methionine-R-sulfoxide reductase B1 (208 aa).

Positions 27-36 (QDSDNPDKRY) are enriched in basic and acidic residues. Positions 27 to 48 (QDSDNPDKRYSGPAATMDNKSE) are disordered. The region spanning 54-188 (KEELRKRLTP…NSASIEFVNA (135 aa)) is the MsrB domain. Zn(2+)-binding residues include C93, C96, C154, and C157. Cysteines 111 and 177 form a disulfide. C177 acts as the Nucleophile in catalysis. Residues 189–208 (DPATSSPPVATPTAAPIAQQ) are disordered.

Belongs to the MsrB Met sulfoxide reductase family. Zn(2+) serves as cofactor. Present in the embryonic nervous system (brain and cord) in neuronal cell bodies, along axons. Also present in embryonic muscles in motor axons. Localizes to growing bristle tips where it is distributed in small puntae. Present at and at sites of actin localization.

It localises to the cytoplasm. The protein resides in the nucleus. The protein localises to the cytoskeleton. The catalysed reaction is L-methionyl-[protein] + [thioredoxin]-disulfide + H2O = L-methionyl-(R)-S-oxide-[protein] + [thioredoxin]-dithiol. In terms of biological role, methionine-sulfoxide reductase that specifically reduces methionine (R)-sulfoxide back to methionine. While in many cases methionine oxidation is the result of random oxidation following oxidative stress, methionine oxidation is also a post-translational modification that takes place on specific residues. Acts as a regulator of actin assembly by reducing methionine (R)-sulfoxide mediated by Mical on actin thereby promoting filament repolymerization. The chain is Methionine-R-sulfoxide reductase B1 (SelR) from Drosophila melanogaster (Fruit fly).